The following is a 430-amino-acid chain: MELSIIGSGYVGTTIAACFAELGHDVVNVDIDEDIVASLNDGQAPIHEPGLAELVERYAGDRLRATTDYDEILDTDATFLALPTPSTDDGSIDLGAMKTAATSLGETLARKDDSHLVVTKSTVVPRTTVDVIGPRIEEASGKRVGDGLDIAMNPEFLREGTAVDDFLSPDKIVLGAQTDRAYETLAEIFAPLVERAGNPPVVKTGISEAEMIKYANNAFLASKISLANDLANICKVFGVDSAEVLESIGLDSRIGSAFLGAGLGWGGSCFPKDTAAIIAAARAQGYEPRLLQAAVDVNDGQPERMLDLLRERFDLDGKRVAVLGLAFKPGTDDIRKSRAILLIQALLDAGADVVGYDPVATENMRERFPDIDYADSAADALANADAALVATDWDEFAALDDEFDAMRERIVIDGRRIVTRREGLDYESLV.

Residue cysteine 269 is part of the active site.

This sequence belongs to the UDP-glucose/GDP-mannose dehydrogenase family.

The enzyme catalyses UDP-alpha-D-glucose + 2 NAD(+) + H2O = UDP-alpha-D-glucuronate + 2 NADH + 3 H(+). It functions in the pathway nucleotide-sugar biosynthesis; UDP-alpha-D-glucuronate biosynthesis; UDP-alpha-D-glucuronate from UDP-alpha-D-glucose: step 1/1. It participates in cell surface structure biogenesis; S-layer biogenesis. Its activity is regulated as follows. Activity improves as salinity decreases. Its function is as follows. Involved in the assembly of a N-linked pentasaccharide that decorates the S-layer glycoprotein and flagellins. Involved in the biosynthesis of the hexuronic acids found at both positions 2 and 3 of the pentasaccharide. This chain is UDP-glucose 6-dehydrogenase AglM (aglM), found in Haloferax volcanii (strain ATCC 29605 / DSM 3757 / JCM 8879 / NBRC 14742 / NCIMB 2012 / VKM B-1768 / DS2) (Halobacterium volcanii).